The following is a 253-amino-acid chain: H repeat-associated putative transposase YbfD (253 aa).

This sequence belongs to the transposase 11 family.

The polypeptide is H repeat-associated putative transposase YbfD (ybfD) (Escherichia coli (strain K12)).